The following is a 325-amino-acid chain: Myo-inositol dehydrogenase Hyg17 (325 aa).

This sequence belongs to the Gfo/Idh/MocA family.

The catalysed reaction is myo-inositol + NAD(+) = myo-inosose-5 + NADH + H(+). Its pathway is antibiotic biosynthesis. Functionally, dehydrogenase involved in the biosynthesis of the aminocyclitol moiety of hygromycin A, a broad-spectrum antibiotic. Catalyzes the NAD(+)-dependent oxidation of myo-inositol to myo-inosose-5 (neo-inosose). Shows reduced activity with scyllo-inositol, minimal activity with L-chiro-inositol and no activity with D-glucose, D-chiro-inositol, epi-inositol, muco-inositol and allo-inositol. Is specific for NAD(+) and cannot use NADP(+). The sequence is that of Myo-inositol dehydrogenase Hyg17 from Streptomyces leeuwenhoekii.